The primary structure comprises 334 residues: Catabolite repressor/activator (334 aa).

In terms of domain architecture, HTH lacI-type spans 1–58 (MKLDEIARLAGVSRTTASYVINGKAKQYRVSDKTVEKVMAVVREHNYHPNAVAAGLRA). The segment at residues 3–22 (LDEIARLAGVSRTTASYVIN) is a DNA-binding region (H-T-H motif).

In terms of assembly, homotetramer.

Its function is as follows. Global transcriptional regulator, which plays an important role in the regulation of carbon metabolism. In Salmonella typhimurium (strain LT2 / SGSC1412 / ATCC 700720), this protein is Catabolite repressor/activator (cra).